The chain runs to 316 residues: Probable cell division protein WhiA (316 aa).

A DNA-binding region (H-T-H motif) is located at residues 280–313 (SLKELGEMLEPPVGKSGVNHRLRKIEKIAEELRT).

It belongs to the WhiA family.

Involved in cell division and chromosome segregation. This is Probable cell division protein WhiA from Clostridium perfringens (strain ATCC 13124 / DSM 756 / JCM 1290 / NCIMB 6125 / NCTC 8237 / Type A).